We begin with the raw amino-acid sequence, 345 residues long: Protoheme IX farnesyltransferase (345 aa).

9 helical membrane-spanning segments follow: residues 33 to 53, 54 to 74, 105 to 125, 126 to 146, 154 to 174, 182 to 202, 226 to 246, 247 to 267, and 315 to 335; these read VMSL…TPIH, PLLG…SGAL, ATLG…AINW, LAAG…TMWL, IVIG…AATG, LMVL…SLYI, QILL…FTGL, GGWL…TLAV, and ILYL…GLPI.

This sequence belongs to the UbiA prenyltransferase family. Protoheme IX farnesyltransferase subfamily.

It localises to the cell inner membrane. The catalysed reaction is heme b + (2E,6E)-farnesyl diphosphate + H2O = Fe(II)-heme o + diphosphate. The protein operates within porphyrin-containing compound metabolism; heme O biosynthesis; heme O from protoheme: step 1/1. Converts heme B (protoheme IX) to heme O by substitution of the vinyl group on carbon 2 of heme B porphyrin ring with a hydroxyethyl farnesyl side group. The polypeptide is Protoheme IX farnesyltransferase (Caulobacter sp. (strain K31)).